Here is a 534-residue protein sequence, read N- to C-terminus: MLGTLGSGFSNFPWLSASILFPIGSAFVIPFFPDKGDGKEVRWFALSIALTTFLITVGSYINGFDINNENVQLKENVSWLPDLGLTWSVGADGISMPLILLTSFITALAVLAAWPVKFKPKLFFFLILVMDGGQIAVFAVQDMLLFFLTWELELIPVYLLLAIWGGKNRQYAATKFIIYTAGSSIFILLAALAMGFYGTEIPNFEFSHLAAQDFTQKFQILCYVGLLIAFGVKLPIVPLHTWLPDAHGEATAPVHMLLAGILLKMGGYALLRFNAQLLPAAHAQFAPLLIVLGVVNIIYAALTSFAQRNLKRKIAYSSISHMGFVLIGIGSFSSLGTSGAMLQMVSHGLIGASLFFLVGATYDRTKTLKLDEMSGVGQKMRIMFALWTACSLASLALPGMSGFVSELMVFTGFVTDEVYTLPFRVIMASLAAIGVILTPIYLLSMLREIFFGKENPKLTEERKLIDAEPREVYIIACLLLPIIGIGLYPRLVTESYLASINNLVDRDLTAVKSAVKTNIFSGTKKNEILKAPTI.

14 consecutive transmembrane segments (helical) span residues 12 to 32 (FPWLSASILFPIGSAFVIPFF), 44 to 64 (FALSIALTTFLITVGSYINGF), 94 to 114 (ISMPLILLTSFITALAVLAAW), 120 to 140 (PKLFFFLILVMDGGQIAVFAV), 144 to 164 (LLFFLTWELELIPVYLLLAIW), 176 to 196 (FIIYTAGSSIFILLAALAMGF), 220 to 240 (ILCYVGLLIAFGVKLPIVPLH), 251 to 271 (TAPVHMLLAGILLKMGGYALL), 285 to 305 (FAPLLIVLGVVNIIYAALTSF), 314 to 334 (IAYSSISHMGFVLIGIGSFSS), 340 to 360 (AMLQMVSHGLIGASLFFLVGA), 384 to 404 (FALWTACSLASLALPGMSGFV), 425 to 445 (VIMASLAAIGVILTPIYLLSM), and 472 to 492 (VYIIACLLLPIIGIGLYPRLV).

It belongs to the complex I subunit 4 family.

Its subcellular location is the cellular thylakoid membrane. It carries out the reaction a plastoquinone + NADH + (n+1) H(+)(in) = a plastoquinol + NAD(+) + n H(+)(out). The enzyme catalyses a plastoquinone + NADPH + (n+1) H(+)(in) = a plastoquinol + NADP(+) + n H(+)(out). Its function is as follows. NDH-1 shuttles electrons from NAD(P)H, via FMN and iron-sulfur (Fe-S) centers, to quinones in the respiratory chain. The immediate electron acceptor for the enzyme in this species is believed to be plastoquinone. Couples the redox reaction to proton translocation (for every two electrons transferred, four hydrogen ions are translocated across the cytoplasmic membrane), and thus conserves the redox energy in a proton gradient. In Prochlorococcus marinus (strain MIT 9312), this protein is NAD(P)H-quinone oxidoreductase chain 4.